We begin with the raw amino-acid sequence, 1021 residues long: tRNA wybutosine-synthesizing protein 4 (1021 aa).

S-adenosyl-L-methionine contacts are provided by residues Arg-68, Asp-122, 171 to 172 (DL), and Glu-198. In terms of domain architecture, JmjC spans 826–980 (PTEAPANLAE…STGRDVYGNR (155 aa)).

It belongs to the methyltransferase superfamily. LCMT family.

The enzyme catalyses 7-[(3S)-3-amino-3-carboxypropyl]wyosine(37) in tRNA(Phe) + S-adenosyl-L-methionine = 7-[(3S)-(3-amino-3-methoxycarbonyl)propyl]wyosine(37) in tRNA(Phe) + S-adenosyl-L-homocysteine. It carries out the reaction 7-[(3S)-(3-amino-3-methoxycarbonyl)propyl]wyosine(37) in tRNA(Phe) + S-adenosyl-L-methionine + CO2 = wybutosine(37) in tRNA(Phe) + S-adenosyl-L-homocysteine + 2 H(+). Its pathway is tRNA modification; wybutosine-tRNA(Phe) biosynthesis. Functionally, probable S-adenosyl-L-methionine-dependent methyltransferase that acts as a component of the wybutosine biosynthesis pathway. Wybutosine is a hyper modified guanosine with a tricyclic base found at the 3'-position adjacent to the anticodon of eukaryotic phenylalanine tRNA. May methylate the carboxyl group of leucine residues to form alpha-leucine ester residues. This chain is tRNA wybutosine-synthesizing protein 4 (PPM2), found in Gibberella zeae (strain ATCC MYA-4620 / CBS 123657 / FGSC 9075 / NRRL 31084 / PH-1) (Wheat head blight fungus).